The following is a 469-amino-acid chain: VDTAEKLSKNGCASNYGATQISVWSMARALNASIPPLTNPMTPSMTFRNSNAGRISGVALVGVIIGGALALFLVVALGVVPYFFLHNTRDNNLAPKELTDPVTLIFTDIESSTALWAAHPELMPDAVATHHRLIRSLIGRYGCYEVKTVGDSFMIASKSPFAAVQLAQELQLCFLHHDWGTNAIDESYQQLEQQRAEEDAKYTPPTARLDLKVYSRLWNGLRVRVGIHTGLCDIRRDEVTKGYDYYGRTSNMAARTESVGNGGQVLMTTAAYMSLSAEEREQIDVTALGDVPLRGVAKPVEMYQLNAVPGRTFAGLRLEHELLNDDEDQTTTSCSDHSSSRTDLSVAAQTIAASLQSLLGTFTPAQRQKALIPFCERWRVPLPQKVGNVWDNDGCQEAIRRVAAKVGRVMDFGTRKASSSVTSLERGGSLFSAGGATVATVASSSNFSCVDGRCGTVQLIDLENDSTTS.

Residues 1-59 lie on the Extracellular side of the membrane; sequence VDTAEKLSKNGCASNYGATQISVWSMARALNASIPPLTNPMTPSMTFRNSNAGRISGVA. Residue asparagine 31 is glycosylated (N-linked (GlcNAc...) asparagine). The chain crosses the membrane as a helical span at residues 60-80; sequence LVGVIIGGALALFLVVALGVV. Residues 81-469 are Cytoplasmic-facing; sequence PYFFLHNTRD…IDLENDSTTS (389 aa). A Guanylate cyclase domain is found at 103–257; sequence TLIFTDIESS…RTSNMAARTE (155 aa). Aspartate 108 and aspartate 151 together coordinate Mg(2+).

It belongs to the adenylyl cyclase class-3 family. The cofactor is Mg(2+).

It localises to the cell membrane. It carries out the reaction ATP = 3',5'-cyclic AMP + diphosphate. In terms of biological role, could act as a receptor for an unknown ligand. The protein is Receptor-type adenylate cyclase (ESAG4C) of Trypanosoma equiperdum.